The following is a 349-amino-acid chain: Dehydrogenase FPY6 (349 aa).

It belongs to the Gfo/Idh/MocA family.

It functions in the pathway secondary metabolite biosynthesis. Functionally, dehydrogenase; part of the gene cluster that mediates the biosynthesis of the gamma-pyrones fusapyrone (FPY) and deoxyfusapyrone (dFPY). FPY is an undecaketide and thus likely synthesized by the polyketide synthase FPY1 from acetyl-CoA functioning as starter unit and the addition of 10 malonyl-CoA extender units by successive Claisen-condensations. Next to this, FPY shares some rare features: C-glycosylated 4-deoxyglucose at C-3, a gem-dimethyl group at C-13, and an alpha-beta to beta-gamma double bond shift at C-20. During FPY biosynthesis mono-C-methyl groups are transferred to the tetra-, penta-, hexa- and heptaketide, while two C-methyl groups are transferred to the nonaketide, suggesting that the CMet domain is programmed to selectively catalyze two successive C-alpha-methylation reactions of the nonaketide, while other alpha-carbons are non- or mono-methylated only. While the origin of the 4'-deoxyglucose moiety remains opaque, its transfer to C-3 is most likely mediated by the C-glycosyltransferase FPY2. Next to this, the hydroxyl group present at C-33 and discriminating between FPY and dFPY, is likely to be installed by the cytochrome P450 monooxygenase FPY7. No putative function can be predicted for the remaining genes FPY3-FPY6. In Fusarium mangiferae (Mango malformation disease fungus), this protein is Dehydrogenase FPY6.